We begin with the raw amino-acid sequence, 627 residues long: uncharacterized protein (627 aa).

Residues 21-136 enclose the WH1 domain; sequence GISASDKILS…NSVCKRQTRS (116 aa). The segment at 310–347 is disordered; that stretch reads RGSLSTPRIPTHRDSYRSATKPDTVPKQTPPPTHNSYV.

This is an uncharacterized protein from Caenorhabditis elegans.